A 319-amino-acid polypeptide reads, in one-letter code: Ankyrin repeat domain-containing protein 1 (319 aa).

Residues 61-89 (KSEKQREAELKKKKLEQRSKLENLEDLEI) adopt a coiled-coil conformation. 5 ANK repeats span residues 152-181 (YKRT…QIEF), 185-214 (LEST…KISA), 218-247 (LLST…DLNA), 251-280 (EGDT…DLNI), and 284-315 (AGKT…KTSR).

Interacts with YBX1. Interacts with TTN/titin. In terms of tissue distribution, mainly expressed in activated vascular endothelial cells. To a lower extent, also expressed in hepatoma cells.

It is found in the nucleus. In terms of biological role, may play an important role in endothelial cell activation. May act as a nuclear transcription factor that negatively regulates the expression of cardiac genes. Induction seems to be correlated with apoptotic cell death in hepatoma cells. The sequence is that of Ankyrin repeat domain-containing protein 1 (ANKRD1) from Homo sapiens (Human).